The primary structure comprises 162 residues: Phosphopantetheine adenylyltransferase (162 aa).

Threonine 10 contacts substrate. ATP is bound by residues 10–11 and histidine 18; that span reads TF. Substrate contacts are provided by lysine 42, leucine 74, and arginine 88. Residues 89-91, glutamate 99, and 124-130 contribute to the ATP site; these read GLR and FSCISST.

It belongs to the bacterial CoaD family. Homohexamer. It depends on Mg(2+) as a cofactor.

It is found in the cytoplasm. The catalysed reaction is (R)-4'-phosphopantetheine + ATP + H(+) = 3'-dephospho-CoA + diphosphate. It participates in cofactor biosynthesis; coenzyme A biosynthesis; CoA from (R)-pantothenate: step 4/5. Reversibly transfers an adenylyl group from ATP to 4'-phosphopantetheine, yielding dephospho-CoA (dPCoA) and pyrophosphate. The chain is Phosphopantetheine adenylyltransferase from Francisella tularensis subsp. mediasiatica (strain FSC147).